We begin with the raw amino-acid sequence, 234 residues long: Cytochrome b (234 aa).

The next 4 helical transmembrane spans lie at 33-53 (FGSL…FLAM), 77-98 (WLIR…YMHV), 113-133 (WNIG…GYVL), and 178-198 (FFAF…IHLL). Positions 83 and 97 each coordinate heme b. Positions 182 and 196 each coordinate heme b. His201 provides a ligand contact to a ubiquinone. A helical transmembrane segment spans residues 226-234 (IKDLLGFLV).

It belongs to the cytochrome b family. As to quaternary structure, the cytochrome bc1 complex contains 11 subunits: 3 respiratory subunits (MT-CYB, CYC1 and UQCRFS1), 2 core proteins (UQCRC1 and UQCRC2) and 6 low-molecular weight proteins (UQCRH/QCR6, UQCRB/QCR7, UQCRQ/QCR8, UQCR10/QCR9, UQCR11/QCR10 and a cleavage product of UQCRFS1). This cytochrome bc1 complex then forms a dimer. Requires heme b as cofactor.

It is found in the mitochondrion inner membrane. Its function is as follows. Component of the ubiquinol-cytochrome c reductase complex (complex III or cytochrome b-c1 complex) that is part of the mitochondrial respiratory chain. The b-c1 complex mediates electron transfer from ubiquinol to cytochrome c. Contributes to the generation of a proton gradient across the mitochondrial membrane that is then used for ATP synthesis. This is Cytochrome b (MT-CYB) from Lepus arcticus (Arctic hare).